Consider the following 233-residue polypeptide: Type IV secretion system protein PtlE homolog (233 aa).

The helical transmembrane segment at 42-62 threads the bilayer; it reads VAWAALAVTALSLIAIATMLP.

It belongs to the virB8 family.

The protein localises to the cell inner membrane. The protein is Type IV secretion system protein PtlE homolog (ptlE) of Bordetella parapertussis (strain 12822 / ATCC BAA-587 / NCTC 13253).